The chain runs to 138 residues: Large ribosomal subunit protein uL16 (138 aa).

Over residues M1–G15 the composition is skewed to basic residues. The disordered stretch occupies residues M1–E20.

It belongs to the universal ribosomal protein uL16 family. In terms of assembly, part of the 50S ribosomal subunit.

In terms of biological role, binds 23S rRNA and is also seen to make contacts with the A and possibly P site tRNAs. The chain is Large ribosomal subunit protein uL16 from Borrelia turicatae (strain 91E135).